The following is a 620-amino-acid chain: FAD-linked oxidoreductase notD (620 aa).

An N-terminal signal peptide occupies residues 1-21 (MHYIRELLIVVFTSCPALSYA). N-linked (GlcNAc...) asparagine glycans are attached at residues Asn50, Asn86, and Asn109. Positions 124–313 (SQGRIPRYSA…TSVTMPVFGA (190 aa)) constitute an FAD-binding PCMH-type domain. An N-linked (GlcNAc...) asparagine glycan is attached at Asn403.

It belongs to the oxygen-dependent FAD-linked oxidoreductase family. The cofactor is FAD.

It functions in the pathway alkaloid biosynthesis. Functionally, FAD-linked oxidoreductase; part of the gene cluster that mediates the biosynthesis of notoamide, a fungal indole alkaloid that belongs to a family of natural products containing a characteristic bicyclo[2.2.2]diazaoctane core. The first step of notoamide biosynthesis involves coupling of L-proline and L-tryptophan by the bimodular NRPS notE, to produce cyclo-L-tryptophan-L-proline called brevianamide F. The reverse prenyltransferase notF then acts as a deoxybrevianamide E synthase and converts brevianamide F to deoxybrevianamide E via reverse prenylation at C-2 of the indole ring leading to the bicyclo[2.2.2]diazaoctane core. Deoxybrevianamide E is further hydroxylated at C-6 of the indole ring, likely catalyzed by the cytochrome P450 monooxygenase notG, to yield 6-hydroxy-deoxybrevianamide E. 6-hydroxy-deoxybrevianamide E is a specific substrate of the prenyltransferase notC for normal prenylation at C-7 to produce 6-hydroxy-7-prenyl-deoxybrevianamide, also called notoamide S. As the proposed pivotal branching point in notoamide biosynthesis, notoamide S can be diverted to notoamide E through an oxidative pyran ring closure putatively catalyzed by either notH cytochrome P450 monooxygenase or the notD FAD-linked oxidoreductase. This step would be followed by an indole 2,3-epoxidation-initiated pinacol-like rearrangement catalyzed by the notB FAD-dependent monooxygenase leading to the formation of notoamide C and notoamide D. On the other hand notoamide S is converted to notoamide T by notH (or notD), a bifunctional oxidase that also functions as the intramolecular Diels-Alderase responsible for generation of (+)-notoamide T. To generate antipodal (-)-notoaminide T, notH' (or notD') in Aspergillus versicolor is expected to catalyze a Diels-Alder reaction leading to the opposite stereochemistry. The remaining oxidoreductase notD (or notH) likely catalyzes the oxidative pyran ring formation to yield (+)-stephacidin A. The FAD-dependent monooxygenase notI is highly similar to notB and is predicted to catalyze a similar conversion from (+)-stephacidin A to (-)-notoamide B via the 2,3-epoxidation of (+)-stephacidin A followed by a pinacol-type rearrangement. Finally, it remains unclear which enzyme could be responsible for the final hydroxylation steps leading to notoamide A and sclerotiamide. The protein is FAD-linked oxidoreductase notD of Aspergillus sp. (strain MF297-2).